Consider the following 84-residue polypeptide: Small ribosomal subunit protein bS20 (84 aa).

The disordered stretch occupies residues 1–25 (MPVIKSAMKRVRTSEKAAARNRSQM).

The protein belongs to the bacterial ribosomal protein bS20 family.

Its function is as follows. Binds directly to 16S ribosomal RNA. The sequence is that of Small ribosomal subunit protein bS20 from Pediococcus pentosaceus (strain ATCC 25745 / CCUG 21536 / LMG 10740 / 183-1w).